The chain runs to 262 residues: Small ribosomal subunit protein uS2 (262 aa).

A disordered region spans residues 240 to 262; the sequence is NLDEKEESQEAESTEENTTVESN. Acidic residues predominate over residues 243 to 254; the sequence is EKEESQEAESTE.

The protein belongs to the universal ribosomal protein uS2 family.

This Staphylococcus haemolyticus (strain JCSC1435) protein is Small ribosomal subunit protein uS2.